A 281-amino-acid polypeptide reads, in one-letter code: Ribosomal RNA small subunit methyltransferase J (281 aa).

S-adenosyl-L-methionine is bound by residues 129–130 (RD), 145–146 (ER), and Asp199.

The protein belongs to the methyltransferase superfamily. RsmJ family.

It localises to the cytoplasm. It carries out the reaction guanosine(1516) in 16S rRNA + S-adenosyl-L-methionine = N(2)-methylguanosine(1516) in 16S rRNA + S-adenosyl-L-homocysteine + H(+). Specifically methylates the guanosine in position 1516 of 16S rRNA. The sequence is that of Ribosomal RNA small subunit methyltransferase J from Laribacter hongkongensis (strain HLHK9).